The following is a 334-amino-acid chain: UL-16 binding protein 5 (334 aa).

The signal sequence occupies residues 1–25 (MAAAASPAFLLRLPLLLLLSSWCRT). At 26–223 (GLADPHSLCY…TMSSGTAQPR (198 aa)) the chain is on the extracellular side. An MHC class I alpha-1 like region spans residues 29 to 117 (DPHSLCYDIT…IQLENYIPKE (89 aa)). The cysteines at positions 50 and 66 are disulfide-linked. The N-linked (GlcNAc...) asparagine glycan is linked to asparagine 82. The tract at residues 118 to 210 (PLTLQARMSC…MDSTLEPSAG (93 aa)) is MHC class I alpha-2 like. The cysteines at positions 127 and 190 are disulfide-linked. Residue glycine 218 is the site of GPI-anchor amidated glycine attachment. A propeptide spans 219–334 (TAQPRATATT…YSEPLQVSIS (116 aa)) (removed in mature form). Residues 224 to 243 (ATATTLILCCLLIMCLLICS) form a helical membrane-spanning segment. The Cytoplasmic portion of the chain corresponds to 244–334 (RHSLTQSHGH…YSEPLQVSIS (91 aa)).

This sequence belongs to the MHC class I family. Interacts with KLRK1/NKG2D. In terms of assembly, (Microbial infection) In CMV-infected cells, interacts with the viral glycoprotein UL16; this interaction causes RAET1G retention in the endoplasmic reticulum and cis-Golgi and prevents binding to and activation of KLRK1/NKG2D, providing CMV with an immune evasion mechanism. The functional form is cleaved C-terminally of the GPI-anchor and yields a 28 kDa protein. In terms of tissue distribution, isoform 1 is highly expressed in colon and in a number of tumor cell lines and highly restricted in normal tissues. Both isoforms are frequently expressed in cell lines derived from epithelial cancers, and in primary breast cancers.

Its subcellular location is the cell membrane. The protein localises to the endoplasmic reticulum. It is found in the secreted. In terms of biological role, binds and activates the KLRK1/NKG2D receptor, mediating natural killer cell cytotoxicity. Its function is as follows. Down-regulates the expression of KLRK1 and stimulates natural killer cells to secrete IFNG. Stimulates natural killer cells to secrete IFNG. In Homo sapiens (Human), this protein is UL-16 binding protein 5.